The primary structure comprises 122 residues: Acidic phospholipase A2 CTs-A3 (122 aa).

Disulfide bonds link cysteine 26–cysteine 116, cysteine 28–cysteine 44, cysteine 43–cysteine 95, cysteine 49–cysteine 122, cysteine 50–cysteine 88, cysteine 57–cysteine 81, and cysteine 75–cysteine 86. The Ca(2+) site is built by tyrosine 27, glycine 29, and glycine 31. Residue histidine 47 is part of the active site. Aspartate 48 serves as a coordination point for Ca(2+). Aspartate 89 is a catalytic residue.

Ca(2+) is required as a cofactor. Expressed by the venom gland.

The protein resides in the secreted. The catalysed reaction is a 1,2-diacyl-sn-glycero-3-phosphocholine + H2O = a 1-acyl-sn-glycero-3-phosphocholine + a fatty acid + H(+). In terms of biological role, snake venom phospholipase A2 (PLA2) that shows a moderate inhibition of ADP-induced human platelet aggregation when tested on platelet rich plasma. Exhibits moderate hydrolytic activities and prefers the anionic micelles (dPPC with deoxycholate) to the zwitterionic micelles (dPPC with Triton X-100). PLA2 catalyzes the calcium-dependent hydrolysis of the 2-acyl groups in 3-sn-phosphoglycerides. This Trimeresurus stejnegeri (Chinese green tree viper) protein is Acidic phospholipase A2 CTs-A3.